A 156-amino-acid polypeptide reads, in one-letter code: N-glycosidase Npun_R5314 (156 aa).

Belongs to the YbiA family.

The enzyme catalyses 2,5-diamino-6-hydroxy-4-(5-phosphoribosylamino)-pyrimidine + H2O = 2,5,6-triamino-4-hydroxypyrimidine + D-ribose 5-phosphate. It catalyses the reaction 5-amino-6-(5-phospho-D-ribosylamino)uracil + H2O = 5,6-diaminouracil + D-ribose 5-phosphate. Functionally, catalyzes the hydrolysis of the N-glycosidic bond in the first two intermediates of riboflavin biosynthesis, which are highly reactive metabolites, yielding relatively innocuous products. Thus, can divert a surplus of harmful intermediates into relatively harmless products and pre-empt the damage these intermediates would otherwise do. May act on other substrates in vivo. Has no activity against GTP, nucleoside monophosphates or ADP-ribose. The sequence is that of N-glycosidase Npun_R5314 from Nostoc punctiforme (strain ATCC 29133 / PCC 73102).